A 112-amino-acid polypeptide reads, in one-letter code: Large ribosomal subunit protein bL21 (112 aa).

It belongs to the bacterial ribosomal protein bL21 family. In terms of assembly, part of the 50S ribosomal subunit. Contacts protein L20.

In terms of biological role, this protein binds to 23S rRNA in the presence of protein L20. The protein is Large ribosomal subunit protein bL21 of Buchnera aphidicola subsp. Baizongia pistaciae (strain Bp).